Consider the following 517-residue polypeptide: Anthranilate--CoA ligase (517 aa).

An AMP-binding site is contributed by 161–172; sequence LQYTSGSTGAPK.

Belongs to the ATP-dependent AMP-binding enzyme family. In terms of assembly, monomer.

The enzyme catalyses anthranilate + ATP + CoA = anthraniloyl-CoA + AMP + diphosphate. In terms of biological role, catalyzes the formation of anthraniloyl-CoA, which is the priming step for entry into the Pseudomonas quinolone signal (PQS) biosynthetic pathway. Also active on a variety of aromatic substrates, including benzoate and chloro and fluoro derivatives of anthranilate. This is Anthranilate--CoA ligase (pqsA) from Pseudomonas aeruginosa (strain ATCC 15692 / DSM 22644 / CIP 104116 / JCM 14847 / LMG 12228 / 1C / PRS 101 / PAO1).